A 53-amino-acid chain; its full sequence is Dihydrolipoyl dehydrogenase (53 aa).

FAD is bound by residues 35 to 44 and Lys53; that span reads EKYPTFGGTC. Cys44 and Cys49 form a disulfide bridge.

It belongs to the class-I pyridine nucleotide-disulfide oxidoreductase family. In terms of assembly, homodimer. FAD serves as cofactor.

Its subcellular location is the mitochondrion. It carries out the reaction N(6)-[(R)-dihydrolipoyl]-L-lysyl-[protein] + NAD(+) = N(6)-[(R)-lipoyl]-L-lysyl-[protein] + NADH + H(+). With respect to regulation, lipoamide reduction and the NADH -&gt; NAD reaction are both completely inhibited by copper and cadmium ions. In terms of biological role, lipoamide dehydrogenase is a component of the glycine cleavage system as well as of the alpha-ketoacid dehydrogenase complexes. This enzyme has lipoamide dehydrogenase activity and NADH -&gt; NAD transhydrogenation activity. Also displays some NADH-ferricyanide reductase and NADPH -&gt; NAD transydrogenation activities. This is Dihydrolipoyl dehydrogenase from Hymenolepis diminuta (Rat tapeworm).